A 231-amino-acid polypeptide reads, in one-letter code: Uracil-DNA glycosylase (231 aa).

Asp-70 serves as the catalytic Proton acceptor.

The protein belongs to the uracil-DNA glycosylase (UDG) superfamily. UNG family.

It localises to the cytoplasm. The catalysed reaction is Hydrolyzes single-stranded DNA or mismatched double-stranded DNA and polynucleotides, releasing free uracil.. Excises uracil residues from the DNA which can arise as a result of misincorporation of dUMP residues by DNA polymerase or due to deamination of cytosine. The sequence is that of Uracil-DNA glycosylase from Campylobacter curvus (strain 525.92).